Here is a 444-residue protein sequence, read N- to C-terminus: Platelet-activating factor acetylhydrolase (444 aa).

A signal peptide spans 1–21 (MLPPKLHALFCLCSCLTLVHP). N-linked (GlcNAc...) asparagine glycans are attached at residues Asn-60 and Asn-200. Ser-274 functions as the Nucleophile in the catalytic mechanism. Residues Asp-297 and His-352 each act as charge relay system in the active site. An N-linked (GlcNAc...) asparagine glycan is attached at Asn-424.

Belongs to the AB hydrolase superfamily. Lipase family. N-glycosylated. As to expression, plasma.

The protein localises to the secreted. The protein resides in the extracellular space. The enzyme catalyses a 1-O-alkyl-2-acetyl-sn-glycero-3-phosphocholine + H2O = a 1-O-alkyl-sn-glycero-3-phosphocholine + acetate + H(+). The catalysed reaction is 1-O-decyl-2-acetyl-sn-glycero-3-phosphocholine + H2O = 1-O-decyl-sn-glycero-3-phosphocholine + acetate + H(+). It carries out the reaction 1-O-dodecyl-2-acetyl-sn-glycero-3-phosphocholine + H2O = 1-O-dodecyl-sn-glycero-3-phosphocholine + acetate + H(+). It catalyses the reaction 1-O-tetradecyl-2-acetyl-sn-glycero-3-phosphocholine + H2O = 1-O-tetradecyl-sn-glycero-3-phosphocholine + acetate + H(+). The enzyme catalyses 1-O-hexadecyl-2-acetyl-sn-glycero-3-phosphocholine + H2O = 1-O-hexadecyl-sn-glycero-3-phosphocholine + acetate + H(+). The catalysed reaction is 1-O-octadecyl-2-acetyl-sn-glycero-3-phosphocholine + H2O = 1-O-octadecyl-sn-glycero-3-phosphocholine + acetate + H(+). It carries out the reaction 1-hexadecanoyl-2-acetyl-sn-glycero-3-phosphocholine + H2O = 1-hexadecanoyl-sn-glycero-3-phosphocholine + acetate + H(+). It catalyses the reaction 1-hexadecanoyl-2-propionyl-sn-glycero-3-phosphocholine + H2O = propanoate + 1-hexadecanoyl-sn-glycero-3-phosphocholine + H(+). The enzyme catalyses 1-hexadecanoyl-2-butanoyl-sn-glycero-3-phosphocholine + H2O = butanoate + 1-hexadecanoyl-sn-glycero-3-phosphocholine + H(+). The catalysed reaction is 1-hexadecanoyl-2-pentanoyl-sn-glycero-3-phosphocholine + H2O = pentanoate + 1-hexadecanoyl-sn-glycero-3-phosphocholine + H(+). It carries out the reaction 1-hexadecanoyl-2-glutaroyl-sn-glycero-3-phosphocholine + H2O = glutarate + 1-hexadecanoyl-sn-glycero-3-phosphocholine + H(+). It catalyses the reaction 1-hexadecanoyl-2-(5-oxopentanoyl)-sn-glycero-3-phosphocholine + H2O = 5-oxopentanoate + 1-hexadecanoyl-sn-glycero-3-phosphocholine + H(+). The enzyme catalyses 1-hexadecanoyl-2-(9-oxononanoyl)-sn-glycero-3-phosphocholine + H2O = 9-oxononanoate + 1-hexadecanoyl-sn-glycero-3-phosphocholine + H(+). The catalysed reaction is 1-hexadecanoyl-2-[9-hydroperoxy-(10E-octadecenoyl)]-sn-glycero-3-phosphocholine + H2O = 9-hydroperoxy-10E-octadecenoate + 1-hexadecanoyl-sn-glycero-3-phosphocholine + H(+). It carries out the reaction 1-hexadecanoyl-2-(10-hydroperoxy-8E-octadecenoyl)-sn-glycero-3-phosphocholine + H2O = 10-hydroperoxy-(8E)-octadecenoate + 1-hexadecanoyl-sn-glycero-3-phosphocholine + H(+). In terms of biological role, lipoprotein-associated calcium-independent phospholipase A2 involved in phospholipid catabolism during inflammatory and oxidative stress response. At the lipid-aqueous interface, hydrolyzes the ester bond of fatty acyl group attached at sn-2 position of phospholipids (phospholipase A2 activity). Specifically targets phospholipids with a short-chain fatty acyl group at sn-2 position. Can hydrolyze phospholipids with long fatty acyl chains, only if they carry oxidized functional groups. Hydrolyzes and inactivates platelet-activating factor (PAF, 1-O-alkyl-2-acetyl-sn-glycero-3-phosphocholine), a potent pro-inflammatory signaling lipid that acts through PTAFR on various innate immune cells. Hydrolyzes oxidatively truncated phospholipids carrying an aldehyde group at omega position, preventing their accumulation in low-density lipoprotein (LDL) particles and uncontrolled pro-inflammatory effects. As part of high-density lipoprotein (HDL) particles, can hydrolyze phospholipids having long-chain fatty acyl hydroperoxides at sn-2 position and protect against potential accumulation of these oxylipins in the vascular wall. Catalyzes the release from membrane phospholipids of F2-isoprostanes, lipid biomarkers of cellular oxidative damage. This chain is Platelet-activating factor acetylhydrolase (PLA2G7), found in Canis lupus familiaris (Dog).